A 500-amino-acid polypeptide reads, in one-letter code: Na(+)/H(+) antiporter NhaB (500 aa).

A run of 12 helical transmembrane segments spans residues 28 to 50 (FLLLNPLLLWLAGPVTSAWVLVG), 68 to 88 (GGLLVLEALLLGLATPEALYA), 98 to 118 (LLLMFMVAGIYFMKDLLLLLF), 121 to 141 (LLLGVRSKALLSLLFCLLAAL), 145 to 165 (FLDALTVTAVVISVAVAFFAV), 205 to 225 (LLMHAAVGTALGGVCTLVGEP), 244 to 264 (QVAPVSMPVLAAGLLTCVLLE), 311 to 331 (VLIVGLALHVAEVGLIGLLVI), 350 to 370 (FQEALPFTALLVVFFAVVAVI), 394 to 414 (MLFIANGLLSAISDNVFVATI), 449 to 469 (VATPNGQAAFLFLLTSSIAPL), and 477 to 497 (MVWMALPYTLVMGGLGWWAVS).

It belongs to the NhaB Na(+)/H(+) (TC 2.A.34) antiporter family.

Its subcellular location is the cell inner membrane. The enzyme catalyses 2 Na(+)(in) + 3 H(+)(out) = 2 Na(+)(out) + 3 H(+)(in). Na(+)/H(+) antiporter that extrudes sodium in exchange for external protons. This chain is Na(+)/H(+) antiporter NhaB, found in Pseudomonas aeruginosa (strain UCBPP-PA14).